We begin with the raw amino-acid sequence, 341 residues long: Phosphoribosylformylglycinamidine cyclo-ligase (341 aa).

It belongs to the AIR synthase family.

The protein localises to the cytoplasm. It carries out the reaction 2-formamido-N(1)-(5-O-phospho-beta-D-ribosyl)acetamidine + ATP = 5-amino-1-(5-phospho-beta-D-ribosyl)imidazole + ADP + phosphate + H(+). It functions in the pathway purine metabolism; IMP biosynthesis via de novo pathway; 5-amino-1-(5-phospho-D-ribosyl)imidazole from N(2)-formyl-N(1)-(5-phospho-D-ribosyl)glycinamide: step 2/2. This Synechococcus elongatus (strain ATCC 33912 / PCC 7942 / FACHB-805) (Anacystis nidulans R2) protein is Phosphoribosylformylglycinamidine cyclo-ligase.